The primary structure comprises 638 residues: DNA repair protein rhp41 (638 aa).

Belongs to the XPC family.

It localises to the nucleus. Functionally, has a role in the nucleotide excision repair (NER) pathway. Acts in both transcription-coupled repair (TCR) which removes damage from the transcribed strand of active genes and in global genome repair (GGR) which removes damage in untranscribed DNA. Involved in the repair of UV-induced damages where it is involved in the removal of cyclobutane pyrimidine dimers (CPDs). The protein is DNA repair protein rhp41 (rhp41) of Schizosaccharomyces pombe (strain 972 / ATCC 24843) (Fission yeast).